The following is a 990-amino-acid chain: Aminopeptidase Q (990 aa).

Residues 2-13 (GPPSSSGFYVSR) lie on the Cytoplasmic side of the membrane. A helical; Signal-anchor for type II membrane protein membrane pass occupies residues 14 to 34 (AVALLLAGLVAALLLALAVLA). The Lumenal portion of the chain corresponds to 35-990 (ALYGHCERVP…RIAAWLRRNT (956 aa)). The tract at residues 48–91 (LPGLRDLEAESSPPLRQKPTPTPKPSSARELAVTTTPSNWRPPG) is disordered. Asn-132 and Asn-168 each carry an N-linked (GlcNAc...) asparagine glycan. A substrate-binding site is contributed by Glu-240. Residues Asn-261, Asn-288, Asn-319, and Asn-346 are each glycosylated (N-linked (GlcNAc...) asparagine). Substrate is bound at residue 379-383 (HAMEN). His-415 is a binding site for Zn(2+). Glu-416 acts as the Proton acceptor in catalysis. Residues His-419 and Glu-438 each coordinate Zn(2+). Tyr-503 acts as the Proton donor in catalysis. 2 N-linked (GlcNAc...) asparagine glycosylation sites follow: Asn-607 and Asn-653.

The protein belongs to the peptidase M1 family. Homodimer. The cofactor is Zn(2+). Post-translationally, N-glycosylated. In terms of tissue distribution, specifically expressed in placenta and not in other tissues. Mainly found at the cell surface region of the extravillous trophoblasts. Detected on extravillous trophoblasts in the outer layer of the chorion laeve in the fetal membrane Not detected on either fetal amnionic epithelial cells or maternal decidual cells. Also detected in the migrating extravillous trophoblasts in the maternal decidual tissues (at protein level).

Its subcellular location is the membrane. Its activity is regulated as follows. Inhibited by bestatin. Its function is as follows. Metalloprotease which may be important for placentation by regulating biological activity of key peptides at the embryo-maternal interface. On synthetic substrates it shows a marked preference for Leu-4-methylcoumaryl-7-amide (Leu-MCA) over Met-MCA, Arg-LCA and Lys-LCA. Cleaves the N-terminal amino acid of several peptides such as angiotensin-3, kisspeptin-10 and endokinin C. The polypeptide is Aminopeptidase Q (Homo sapiens (Human)).